The sequence spans 291 residues: ADP-dependent (S)-NAD(P)H-hydrate dehydratase (291 aa).

The region spanning 5 to 273 is the YjeF C-terminal domain; sequence SKDILEEVIT…QALPTYMKKY (269 aa). 3 residues coordinate (6S)-NADPHX: Ala-40, Gly-103, and His-153. Gly-215 contacts AMP. Asp-216 provides a ligand contact to (6S)-NADPHX.

It belongs to the NnrD/CARKD family. Homotetramer. Requires Mg(2+) as cofactor.

The enzyme catalyses (6S)-NADHX + ADP = AMP + phosphate + NADH + H(+). It carries out the reaction (6S)-NADPHX + ADP = AMP + phosphate + NADPH + H(+). Its function is as follows. Catalyzes the dehydration of the S-form of NAD(P)HX at the expense of ADP, which is converted to AMP. Together with NAD(P)HX epimerase, which catalyzes the epimerization of the S- and R-forms, the enzyme allows the repair of both epimers of NAD(P)HX, a damaged form of NAD(P)H that is a result of enzymatic or heat-dependent hydration. This Enterococcus faecalis (strain ATCC 700802 / V583) protein is ADP-dependent (S)-NAD(P)H-hydrate dehydratase.